The following is a 275-amino-acid chain: Elongation factor Ts (275 aa).

Residues 80–83 (TDFV) are involved in Mg(2+) ion dislocation from EF-Tu.

It belongs to the EF-Ts family.

Its subcellular location is the cytoplasm. In terms of biological role, associates with the EF-Tu.GDP complex and induces the exchange of GDP to GTP. It remains bound to the aminoacyl-tRNA.EF-Tu.GTP complex up to the GTP hydrolysis stage on the ribosome. The chain is Elongation factor Ts from Clavibacter michiganensis subsp. michiganensis (strain NCPPB 382).